A 424-amino-acid chain; its full sequence is tRNA(Ile)-lysidine synthase (424 aa).

Residue 26–31 (SGGIDS) coordinates ATP.

The protein belongs to the tRNA(Ile)-lysidine synthase family.

It is found in the cytoplasm. It carries out the reaction cytidine(34) in tRNA(Ile2) + L-lysine + ATP = lysidine(34) in tRNA(Ile2) + AMP + diphosphate + H(+). Its function is as follows. Ligates lysine onto the cytidine present at position 34 of the AUA codon-specific tRNA(Ile) that contains the anticodon CAU, in an ATP-dependent manner. Cytidine is converted to lysidine, thus changing the amino acid specificity of the tRNA from methionine to isoleucine. The protein is tRNA(Ile)-lysidine synthase of Streptococcus agalactiae serotype V (strain ATCC BAA-611 / 2603 V/R).